We begin with the raw amino-acid sequence, 247 residues long: Diglucosylglycerate octanoyltransferase (247 aa).

Belongs to the OctT acyltransferase family. In terms of assembly, homotetramer.

It catalyses the reaction (2R)-2-O-[alpha-D-glucopyranosyl-(1-&gt;6)-alpha-D-glucopyranosyl]-glycerate + octanoyl-CoA = (2R)-2-O-[6-O-octanoyl-alpha-D-glucopyranosyl-(1-&gt;6)-alpha-D-glucopyranosyl]-glycerate + CoA. In terms of biological role, sugar octanoyltransferase likely involved in the biosynthesis of mycobacterial methylglucose lipopolysaccharide (MGLP). Catalyzes the transfer of an octanoyl group from octanoyl-CoA to the C6 OH of the second glucose in diglucosylglycerate (DGG). DGG is the preferred acceptor, but to a lesser extent, GG (glucosylglycerate) can also be used as substrate. DGG and GG are the two earliest intermediates in MGLP biosynthesis. The sequence is that of Diglucosylglycerate octanoyltransferase from Mycobacterium tuberculosis (strain ATCC 25618 / H37Rv).